Consider the following 273-residue polypeptide: tRNA (guanine-N(7)-)-methyltransferase (273 aa).

The disordered stretch occupies residues 1–32; sequence MSATAKKSAAQLQREEEEARKKLKRLSKQGGV. Residues G88, 111-112, 150-151, and C170 contribute to the S-adenosyl-L-methionine site; these read EI and NC. The active site involves D173. 248–250 contacts S-adenosyl-L-methionine; that stretch reads TEE.

The protein belongs to the class I-like SAM-binding methyltransferase superfamily. TrmB family. Forms a complex with trm82.

The protein localises to the nucleus. The catalysed reaction is guanosine(46) in tRNA + S-adenosyl-L-methionine = N(7)-methylguanosine(46) in tRNA + S-adenosyl-L-homocysteine. It functions in the pathway tRNA modification; N(7)-methylguanine-tRNA biosynthesis. Catalyzes the formation of N(7)-methylguanine at position 46 (m7G46) in tRNA. The chain is tRNA (guanine-N(7)-)-methyltransferase (trm8) from Schizosaccharomyces pombe (strain 972 / ATCC 24843) (Fission yeast).